Reading from the N-terminus, the 512-residue chain is Ribose import ATP-binding protein RbsA 1 (512 aa).

ABC transporter domains follow at residues 8–244 and 257–502; these read FRME…IGRE and PEEK…LNIG. 40-47 contributes to the ATP binding site; sequence GENGAGKS.

Belongs to the ABC transporter superfamily. Ribose importer (TC 3.A.1.2.1) family. As to quaternary structure, the complex is composed of an ATP-binding protein (RbsA), two transmembrane proteins (RbsC) and a solute-binding protein (RbsB).

It localises to the cell inner membrane. The catalysed reaction is D-ribose(out) + ATP + H2O = D-ribose(in) + ADP + phosphate + H(+). Its function is as follows. Part of the ABC transporter complex RbsABC involved in ribose import. Responsible for energy coupling to the transport system. The polypeptide is Ribose import ATP-binding protein RbsA 1 (Rhizobium etli (strain ATCC 51251 / DSM 11541 / JCM 21823 / NBRC 15573 / CFN 42)).